Reading from the N-terminus, the 1928-residue chain is Lactase/phlorizin hydrolase (1928 aa).

The signal sequence occupies residues 1-21; that stretch reads MELPWTALFLSTVLLGLSCQG. Residues 22-867 constitute a propeptide, XBetaGly; that stretch reads SDWESDRNFI…LPVRADFTSR (846 aa). Residues 22-1883 are Extracellular-facing; that stretch reads SDWESDRNFI…LMLGIAEAQT (1862 aa). The tract at residues 46–289 is glycosyl hydrolase-1 1; Region I; that stretch reads NYPPGKQGSD…FIYTLKLEDC (244 aa). The tract at residues 364-856 is glycosyl hydrolase-1 2; Region II; that stretch reads VWAAFANQSR…GFSAKKVKRN (493 aa). N-linked (GlcNAc...) asparagine glycosylation is found at asparagine 370, asparagine 514, asparagine 824, asparagine 936, asparagine 948, asparagine 991, and asparagine 1037. Residues 904–1367 are glycosyl hydrolase-1 3; Region III. Phlorizin hydrolase/Glycosylceramidase activity; it reads RFRDDFLWGV…DLIANNGMPL (464 aa). The Proton donor; for phlorizin hydrolase/Glycosylceramidase activity role is filled by glutamate 1067. 2 N-linked (GlcNAc...) asparagine glycosylation sites follow: asparagine 1176 and asparagine 1240. Residue glutamate 1274 is the Nucleophile; for phlorizin hydrolase/Glycosylceramidase activity of the active site. Asparagine 1281 and asparagine 1509 each carry an N-linked (GlcNAc...) asparagine glycan. The glycosyl hydrolase-1 4; Region IV. Lactase activity stretch occupies residues 1374 to 1847; that stretch reads LYGEFPKGFI…CNGFPDPAQG (474 aa). The Proton donor; for lactase activity role is filled by glutamate 1539. N-linked (GlcNAc...) asparagine glycosylation is found at asparagine 1657 and asparagine 1684. The Nucleophile; for lactase activity role is filled by glutamate 1750. N-linked (GlcNAc...) asparagine glycans are attached at residues asparagine 1762 and asparagine 1815. Residues 1884–1902 form a helical membrane-spanning segment; it reads ALYVLFALLLLGACSLAFL. At 1903–1928 the chain is on the cytoplasmic side; sequence TYNTGRRSKQGNAQPSQHQLSPISSF.

It belongs to the glycosyl hydrolase 1 family. Homodimer. Post-translationally, N-glycosylated. In terms of tissue distribution, intestine.

Its subcellular location is the apical cell membrane. It carries out the reaction lactose + H2O = beta-D-galactose + D-glucose. The catalysed reaction is phlorizin + H2O = phloretin + beta-D-glucose. It catalyses the reaction D-cellobiose + H2O = beta-D-glucose + D-glucose. The enzyme catalyses quercetin 4'-O-beta-D-glucoside + H2O = quercetin + beta-D-glucose. It carries out the reaction quercetin 3-O-beta-D-glucoside + H2O = quercetin + beta-D-glucose. The catalysed reaction is kaempferol 3-O-beta-D-glucoside + H2O = kaempferol + beta-D-glucose. It catalyses the reaction luteolin 7-O-beta-D-glucoside + H2O = luteolin + beta-D-glucose. The enzyme catalyses luteolin 4'-O-beta-D-glucoside + H2O = luteolin + beta-D-glucose. It carries out the reaction (2S)-naringenin 7-O-beta-D-glucoside + H2O = (2S)-naringenin + beta-D-glucose. The catalysed reaction is eriodictyol-7-O-beta-D-glucoside + H2O = (S)-eriodictyol + beta-D-glucose. It catalyses the reaction apigenin 7-O-beta-D-glucoside + H2O = apigenin + beta-D-glucose. The enzyme catalyses daidzein 7-O-beta-D-glucoside + H2O = daidzein + beta-D-glucose + H(+). It carries out the reaction genistein 7-O-beta-D-glucoside + H2O = genistein + beta-D-glucose. The catalysed reaction is a beta-D-galactosyl-N-acylsphingosine + H2O = a ceramide + beta-D-galactose.. It catalyses the reaction beta-D-glucosyl-(1&lt;-&gt;1')-N-hexadecanoylsphing-4-enine + H2O = N-hexadecanoylsphing-4-enine + beta-D-glucose. The enzyme catalyses beta-D-galactosyl-(1&lt;-&gt;1')-N-hexadecanoylsphing-4-enine + H2O = beta-D-galactose + N-hexadecanoylsphing-4-enine. It carries out the reaction beta-D-galactosyl-(1&lt;-&gt;1')-N-hexadecanoylsphinganine + H2O = N-hexadecanoylsphinganine + beta-D-galactose. The catalysed reaction is beta-D-glucosyl-(1&lt;-&gt;1')-N-hexadecanoylsphinganine + H2O = N-hexadecanoylsphinganine + beta-D-glucose. Broad specificity glycosidase of the intestinal brush border membrane that hydrolyzes lactose, the main sugar in mammalian milk, to produce D-glucose and D-galactose. The mature protein is composed of two domains that catalyze the hydrolysis of beta-glucopyranosides and beta-galactopyranosides, with a preference for hydrophilic aglycones (in lactose and cellobiose) for one domain and hydrophobic aglycones (in phlorizin and glycosylceramides) for the other. This chain is Lactase/phlorizin hydrolase, found in Rattus norvegicus (Rat).